The chain runs to 413 residues: 1-deoxy-D-xylulose 5-phosphate reductoisomerase (413 aa).

Residues Thr28, Gly29, Ser30, Ile31, Gly54, Arg55, Asn56, and Asn142 each coordinate NADPH. Lys143 is a binding site for 1-deoxy-D-xylulose 5-phosphate. Glu144 is a binding site for NADPH. Asp168 is a binding site for Mn(2+). Positions 169, 170, 194, and 217 each coordinate 1-deoxy-D-xylulose 5-phosphate. Position 170 (Glu170) interacts with Mn(2+). NADPH is bound at residue Gly223. Residues Ser230, Asn235, Lys236, and Glu239 each coordinate 1-deoxy-D-xylulose 5-phosphate. Glu239 contacts Mn(2+).

This sequence belongs to the DXR family. It depends on Mg(2+) as a cofactor. The cofactor is Mn(2+).

The enzyme catalyses 2-C-methyl-D-erythritol 4-phosphate + NADP(+) = 1-deoxy-D-xylulose 5-phosphate + NADPH + H(+). Its pathway is isoprenoid biosynthesis; isopentenyl diphosphate biosynthesis via DXP pathway; isopentenyl diphosphate from 1-deoxy-D-xylulose 5-phosphate: step 1/6. Functionally, catalyzes the NADPH-dependent rearrangement and reduction of 1-deoxy-D-xylulose-5-phosphate (DXP) to 2-C-methyl-D-erythritol 4-phosphate (MEP). The chain is 1-deoxy-D-xylulose 5-phosphate reductoisomerase from Thermosynechococcus vestitus (strain NIES-2133 / IAM M-273 / BP-1).